The chain runs to 118 residues: Large ribosomal subunit protein uL18 (118 aa).

The protein belongs to the universal ribosomal protein uL18 family. As to quaternary structure, part of the 50S ribosomal subunit; part of the 5S rRNA/L5/L18/L25 subcomplex. Contacts the 5S and 23S rRNAs.

Functionally, this is one of the proteins that bind and probably mediate the attachment of the 5S RNA into the large ribosomal subunit, where it forms part of the central protuberance. The protein is Large ribosomal subunit protein uL18 of Rickettsia conorii (strain ATCC VR-613 / Malish 7).